A 528-amino-acid chain; its full sequence is Probable serine protease HtrA1 (528 aa).

The disordered stretch occupies residues 1 to 70 (MDTRVDTDNA…RPSGVQGSFV (70 aa)). At 1 to 178 (MDTRVDTDNA…DVLFGGKVSY (178 aa)) the chain is on the cytoplasmic side. Gly residues predominate over residues 31–40 (NNGGPNGGGR). A helical membrane pass occupies residues 179–199 (LALGILVAIALVIGGIGGVIG). Residues 200 to 528 (RKTAEVVDAF…LTVKPDPDST (329 aa)) are Periplasmic-facing. Catalysis depends on charge relay system residues H270, D306, and S387. In terms of domain architecture, PDZ spans 426 to 487 (LVANSLIKDG…VIVKVGNRAV (62 aa)).

This sequence belongs to the peptidase S1C family. As to quaternary structure, the C-terminal region exhibits both monomeric and trimeric forms in solution.

It localises to the cell inner membrane. The enzyme catalyses Acts on substrates that are at least partially unfolded. The cleavage site P1 residue is normally between a pair of hydrophobic residues, such as Val-|-Val.. In terms of biological role, essential protein that may act as a regulatory protease that is conditionally activated upon appropriate environmental triggers. The chain is Probable serine protease HtrA1 from Mycobacterium tuberculosis (strain ATCC 25618 / H37Rv).